The primary structure comprises 142 residues: Nucleoside diphosphate kinase (142 aa).

Residues Lys-11, Phe-59, Arg-87, Thr-93, Arg-104, and Asn-114 each coordinate ATP. Residue His-117 is the Pros-phosphohistidine intermediate of the active site.

This sequence belongs to the NDK family. In terms of assembly, homotetramer. Mg(2+) is required as a cofactor.

It localises to the cytoplasm. It carries out the reaction dZDP + ATP = dZTP + ADP. It catalyses the reaction a 2'-deoxyribonucleoside 5'-diphosphate + ATP = a 2'-deoxyribonucleoside 5'-triphosphate + ADP. The catalysed reaction is a ribonucleoside 5'-diphosphate + ATP = a ribonucleoside 5'-triphosphate + ADP. Its pathway is purine metabolism. Its function is as follows. Major role in the synthesis of nucleoside triphosphates other than ATP. The ATP gamma phosphate is transferred to the NDP beta phosphate via a ping-pong mechanism, using a phosphorylated active-site intermediate. (Microbial infection) Catalyzes the phosphorylation of dZDP to dZTP, when the bacterium is infected by a phage that produces the substrate for the synthesis of dZTP (2- amino-2'-deoxyadenosine 5'-triphosphate), which is then used by the phage as a DNA polymerase substrate. The sequence is that of Nucleoside diphosphate kinase from Vibrio cholerae serotype O1 (strain ATCC 39315 / El Tor Inaba N16961).